A 282-amino-acid chain; its full sequence is Small ribosomal subunit protein uS2 (282 aa).

The tract at residues Lys-260 to Arg-282 is disordered. The span at Val-266–Arg-282 shows a compositional bias: basic and acidic residues.

The protein belongs to the universal ribosomal protein uS2 family.

The sequence is that of Small ribosomal subunit protein uS2 from Wolbachia sp. subsp. Drosophila simulans (strain wRi).